The following is a 510-amino-acid chain: 2,3-bisphosphoglycerate-independent phosphoglycerate mutase (510 aa).

Mn(2+)-binding residues include aspartate 13 and serine 63. Catalysis depends on serine 63, which acts as the Phosphoserine intermediate. Residues histidine 124, arginine 154–aspartate 155, arginine 186, arginine 192, arginine 262–arginine 265, and lysine 334 contribute to the substrate site. Mn(2+)-binding residues include aspartate 401, histidine 405, aspartate 442, histidine 443, and histidine 461.

Belongs to the BPG-independent phosphoglycerate mutase family. As to quaternary structure, monomer. Mn(2+) is required as a cofactor.

The enzyme catalyses (2R)-2-phosphoglycerate = (2R)-3-phosphoglycerate. The protein operates within carbohydrate degradation; glycolysis; pyruvate from D-glyceraldehyde 3-phosphate: step 3/5. Catalyzes the interconversion of 2-phosphoglycerate and 3-phosphoglycerate. This chain is 2,3-bisphosphoglycerate-independent phosphoglycerate mutase, found in Vibrio vulnificus (strain YJ016).